Reading from the N-terminus, the 179-residue chain is dCTP deaminase (179 aa).

DCTP is bound by residues 101–106 (RSTLAR) and Asp-117. The active-site Proton donor/acceptor is Glu-127. Gln-165 is a dCTP binding site.

It belongs to the dCTP deaminase family. As to quaternary structure, homotrimer.

The enzyme catalyses dCTP + H2O + H(+) = dUTP + NH4(+). The protein operates within pyrimidine metabolism; dUMP biosynthesis; dUMP from dCTP (dUTP route): step 1/2. Catalyzes the deamination of dCTP to dUTP. This Caldivirga maquilingensis (strain ATCC 700844 / DSM 13496 / JCM 10307 / IC-167) protein is dCTP deaminase.